A 592-amino-acid polypeptide reads, in one-letter code: Inactive heparanase-2 (592 aa).

An N-terminal signal peptide occupies residues 1–41 (MRVLCAFPEAMPSSNSRPPACLAPGALYLALLLHLSLSSQA). N-linked (GlcNAc...) asparagine glycans are attached at residues N254 and N392.

Belongs to the glycosyl hydrolase 79 family. As to quaternary structure, interacts with HPSE. Interacts with SDC1 (via glycan chains). Widely expressed, with the highest expression in brain, mammary gland, prostate, small intestine, testis and uterus. In the central nervous system, expressed in the spinal cord, caudate nucleus, thalamus, substantia nigra, medulla oblongata, putamen and pons. In the urinary bladder, expressed in longitudinal and circular layers of detrusor muscle. Found both in normal and cancer tissues.

Its subcellular location is the secreted. The protein localises to the extracellular space. The protein resides in the extracellular matrix. Its function is as follows. Binds heparin and heparan sulfate with high affinity, but lacks heparanase activity. Inhibits HPSE, possibly by competing for its substrates (in vitro). In Homo sapiens (Human), this protein is Inactive heparanase-2 (HPSE2).